We begin with the raw amino-acid sequence, 690 residues long: Wilms tumor protein 1-interacting protein homolog (690 aa).

Disordered stretches follow at residues 151 to 316 (MSAT…VSPR) and 328 to 372 (TLGS…PRSS). Positions 152–186 (SATSPRSSMASSASSSQEHSKYSSPRSSISSNALS) are enriched in low complexity. 4 stretches are compositionally biased toward polar residues: residues 204 to 214 (EKYTSPRSSLG), 223 to 233 (PRSSYASTTSD), 240 to 261 (PRAS…TSGI), and 272 to 292 (PRSS…SYSD). Residues 335-357 (SVVSPRSSISSHSSRSSRSSRGS) show a composition bias toward low complexity. 3 consecutive LIM zinc-binding domains span residues 479-540 (GICI…SGFQ), 544-603 (DKCF…TVFA), and 604-673 (PKCA…RLSV).

Belongs to the zyxin/ajuba family. In terms of assembly, interacts with prickle3.

The protein localises to the cell junction. It localises to the adherens junction. Its subcellular location is the nucleus. Functionally, may monitor slit diaphragm protein assembly, a specialized adherens junction characteristic of podocytes. In case of podocyte injury, it shuttles into the nucleus and acts as a transcription regulator. Plays a role in the regulation of cell morphology and cytoskeletal organization. Acts as a transcriptional corepressor for snai1 and snai2/slug and plays a role in regulating neural crest development. Involved in the organization of the basal body. Involved in cilia growth and positioning. The chain is Wilms tumor protein 1-interacting protein homolog (wtip) from Xenopus laevis (African clawed frog).